The chain runs to 417 residues: Exodeoxyribonuclease 7 large subunit (417 aa).

This sequence belongs to the XseA family. As to quaternary structure, heterooligomer composed of large and small subunits.

It localises to the cytoplasm. The catalysed reaction is Exonucleolytic cleavage in either 5'- to 3'- or 3'- to 5'-direction to yield nucleoside 5'-phosphates.. Functionally, bidirectionally degrades single-stranded DNA into large acid-insoluble oligonucleotides, which are then degraded further into small acid-soluble oligonucleotides. This is Exodeoxyribonuclease 7 large subunit from Lactococcus lactis subsp. lactis (strain IL1403) (Streptococcus lactis).